The sequence spans 1395 residues: DNA polymerase II large subunit (1395 aa).

2 disordered regions span residues 279–320 (IGKD…PRVE) and 657–704 (GNRM…MSDT). Positions 283–312 (EADEGDSAEDANGDDAGEGADDDGGDEADE) are enriched in acidic residues. Basic and acidic residues-rich tracts occupy residues 661–671 (GRPEKSERRDL) and 690–700 (DVAKATKHADD).

Belongs to the archaeal DNA polymerase II family. As to quaternary structure, heterodimer of a large subunit and a small subunit. Post-translationally, this protein undergoes a protein self splicing that involves a post-translational excision of the intervening region (intein) followed by peptide ligation.

It carries out the reaction DNA(n) + a 2'-deoxyribonucleoside 5'-triphosphate = DNA(n+1) + diphosphate. The catalysed reaction is Exonucleolytic cleavage in the 3'- to 5'-direction to yield nucleoside 5'-phosphates.. Its function is as follows. Possesses two activities: a DNA synthesis (polymerase) and an exonucleolytic activity that degrades single-stranded DNA in the 3'- to 5'-direction. Has a template-primer preference which is characteristic of a replicative DNA polymerase. The chain is DNA polymerase II large subunit from Haloarcula marismortui (strain ATCC 43049 / DSM 3752 / JCM 8966 / VKM B-1809) (Halobacterium marismortui).